A 176-amino-acid polypeptide reads, in one-letter code: Large ribosomal subunit protein uL10 (176 aa).

Belongs to the universal ribosomal protein uL10 family. Part of the ribosomal stalk of the 50S ribosomal subunit. The N-terminus interacts with L11 and the large rRNA to form the base of the stalk. The C-terminus forms an elongated spine to which L12 dimers bind in a sequential fashion forming a multimeric L10(L12)X complex.

In terms of biological role, forms part of the ribosomal stalk, playing a central role in the interaction of the ribosome with GTP-bound translation factors. This chain is Large ribosomal subunit protein uL10, found in Streptomyces avermitilis (strain ATCC 31267 / DSM 46492 / JCM 5070 / NBRC 14893 / NCIMB 12804 / NRRL 8165 / MA-4680).